The following is a 312-amino-acid chain: Methionyl-tRNA formyltransferase (312 aa).

109–112 lines the (6S)-5,6,7,8-tetrahydrofolate pocket; the sequence is SLLP.

This sequence belongs to the Fmt family.

The catalysed reaction is L-methionyl-tRNA(fMet) + (6R)-10-formyltetrahydrofolate = N-formyl-L-methionyl-tRNA(fMet) + (6S)-5,6,7,8-tetrahydrofolate + H(+). Functionally, attaches a formyl group to the free amino group of methionyl-tRNA(fMet). The formyl group appears to play a dual role in the initiator identity of N-formylmethionyl-tRNA by promoting its recognition by IF2 and preventing the misappropriation of this tRNA by the elongation apparatus. This Listeria monocytogenes serovar 1/2a (strain ATCC BAA-679 / EGD-e) protein is Methionyl-tRNA formyltransferase.